Reading from the N-terminus, the 140-residue chain is MAIERTLSIIKPDATKRNLTGKINAKFEDAGLRIVAQKRIHLTKAQAGVFYAVHAERPFYDELCEFMASEPVVVQVLEGEGAIAKNREVMGATNPADAAPGTIRAEFAESVGENSVHGSDAPETAAVEIAYFFSGLELVG.

Lys-11, Phe-59, Arg-87, Thr-93, Arg-104, and Asn-114 together coordinate ATP. His-117 serves as the catalytic Pros-phosphohistidine intermediate.

Belongs to the NDK family. In terms of assembly, homotetramer. Mg(2+) serves as cofactor.

The protein resides in the cytoplasm. The catalysed reaction is a 2'-deoxyribonucleoside 5'-diphosphate + ATP = a 2'-deoxyribonucleoside 5'-triphosphate + ADP. It carries out the reaction a ribonucleoside 5'-diphosphate + ATP = a ribonucleoside 5'-triphosphate + ADP. In terms of biological role, major role in the synthesis of nucleoside triphosphates other than ATP. The ATP gamma phosphate is transferred to the NDP beta phosphate via a ping-pong mechanism, using a phosphorylated active-site intermediate. In Dinoroseobacter shibae (strain DSM 16493 / NCIMB 14021 / DFL 12), this protein is Nucleoside diphosphate kinase.